The sequence spans 118 residues: Large ribosomal subunit protein bL20 (118 aa).

The protein belongs to the bacterial ribosomal protein bL20 family.

Binds directly to 23S ribosomal RNA and is necessary for the in vitro assembly process of the 50S ribosomal subunit. It is not involved in the protein synthesizing functions of that subunit. This Parvibaculum lavamentivorans (strain DS-1 / DSM 13023 / NCIMB 13966) protein is Large ribosomal subunit protein bL20.